A 219-amino-acid chain; its full sequence is Tegument protein UL14 (219 aa).

A disordered region spans residues Val-159–Glu-219. The span at Ala-186–Ala-202 shows a compositional bias: pro residues.

Belongs to the alphaherpesvirinae HHV-1 UL14 protein family. Post-translationally, phosphorylated.

Its subcellular location is the virion tegument. The protein resides in the host cytoplasm. The protein localises to the host nucleus. Contributes to the nuclear transport of the viral transcriptional activator VP16 during the early phase of infection. Therefore, participates indirectly in the regulation of the immediate-early gene expression. Additionally, seems to be important for efficient nuclear targeting of capsids. This chain is Tegument protein UL14, found in Human herpesvirus 2 (strain HG52) (HHV-2).